The primary structure comprises 344 residues: Arginine N-succinyltransferase (344 aa).

L125 lines the succinyl-CoA pocket. The Proton donor role is filled by H229.

The protein belongs to the arginine N-succinyltransferase family.

The catalysed reaction is succinyl-CoA + L-arginine = N(2)-succinyl-L-arginine + CoA + H(+). The protein operates within amino-acid degradation; L-arginine degradation via AST pathway; L-glutamate and succinate from L-arginine: step 1/5. Functionally, catalyzes the transfer of succinyl-CoA to arginine to produce N(2)-succinylarginine. In Salmonella arizonae (strain ATCC BAA-731 / CDC346-86 / RSK2980), this protein is Arginine N-succinyltransferase.